The following is a 183-amino-acid chain: Nodulation protein L (183 aa).

Belongs to the transferase hexapeptide repeat family.

Its function is as follows. Acetyltransferase implicated in the O-acetylation of Nod factors. This Rhizobium meliloti (strain 1021) (Ensifer meliloti) protein is Nodulation protein L (nodL).